A 723-amino-acid polypeptide reads, in one-letter code: FACT complex subunit Ssrp1 (723 aa).

Serine 443 is modified (phosphoserine). Disordered stretches follow at residues 459–564 (EARE…AFML) and 586–723 (AKKG…EASD). Composition is skewed to acidic residues over residues 464-478 (EEDD…ESTD) and 486-507 (NESD…DDSD). Residues 531–557 (KKEKKHKEKERTKKPSKKKKDSGKPKR) show a composition bias toward basic residues. The segment at residues 555–621 (PKRATTAFML…RYHDEMRNYK (67 aa)) is a DNA-binding region (HMG box). A compositionally biased stretch (basic and acidic residues) spans 586 to 621 (AKKGGEMWKELKDKSKWEDAAAKDKQRYHDEMRNYK). Position 628 is a phosphoserine (serine 628). Residues 644-656 (PSPSKKANTSGSG) are compositionally biased toward polar residues. Serine 664 and serine 668 each carry phosphoserine. Residues 664–676 (SDDDSTSSDDEKD) show a composition bias toward acidic residues. Threonine 669 carries the phosphothreonine modification. 2 positions are modified to phosphoserine: serine 670 and serine 671. Residues 677–692 (NEPAKKKSKPPSDGDA) show a composition bias toward basic and acidic residues. Residues 702–723 (EPEESEEDSNASDEDEEDEASD) are compositionally biased toward acidic residues.

It belongs to the SSRP1 family. As to quaternary structure, component of the FACT complex, a stable heterodimer of dre4/spt16 and Ssrp. Interacts with CHD1 and TRL/GAGA. As to expression, expressed at highest levels in nurse cells of the ovary.

Its subcellular location is the nucleus. The protein localises to the chromosome. It is found in the nucleolus. Component of the FACT complex, a general chromatin factor that acts to reorganize nucleosomes. The FACT complex is involved in multiple processes that require DNA as a template such as mRNA elongation, DNA replication and DNA repair. During transcription elongation the FACT complex acts as a histone chaperone that both destabilizes and restores nucleosomal structure. It facilitates the passage of RNA polymerase II and transcription by promoting the dissociation of one histone H2A-H2B dimer from the nucleosome, then subsequently promotes the reestablishment of the nucleosome following the passage of RNA polymerase II. Binds specifically to single-stranded DNA and RNA with highest affinity for nucleotides G and U. The FACT complex is required for expression of Hox genes. The protein is FACT complex subunit Ssrp1 (Ssrp) of Drosophila melanogaster (Fruit fly).